Consider the following 947-residue polypeptide: Bromodomain testis-specific protein (947 aa).

In terms of domain architecture, Bromo 1 spans 27-133 (RLTNQLQYLQ…KLFMQKLSQM (107 aa)). Asn109 serves as a coordination point for JQ1. Residue Ser187 is modified to Phosphoserine. Residues 202-228 (QTAAQVTKGVKRKADTTTPATSAVKAS) form a disordered region. Positions 209-220 (KGVKRKADTTTP) match the Nuclear localization signal motif. Residues 217 to 228 (TTTPATSAVKAS) show a composition bias toward polar residues. A Bromo 2 domain is found at 267–376 (VKVTEQLRHC…DVFETHFSKI (110 aa)). Disordered stretches follow at residues 395-420 (ETTG…DERV), 444-511 (PFRK…KPMN), 610-698 (NNQL…IPPE), and 882-924 (NKCS…RRRE). The stretch at 417-470 (DERVKRLAKLQEQLKAVHQQLQVLSQVPFRKLNKKKEKSKKEKKKEKVNNSNEN) forms a coiled coil. Residues 447–462 (KLNKKKEKSKKEKKKE) show a composition bias toward basic residues. Residues 470–481 (NPRKMCEQMRLK) are compositionally biased toward basic and acidic residues. Residues 482–494 (EKSKRNQPKKRKQ) show a composition bias toward basic residues. One can recognise an NET domain in the interval 500–582 (KSEDEDNAKP…ACLRKRPLKP (83 aa)). Positions 591-621 (KEELHSQKKQELEKRLLDVNNQLNSRKRQTK) form a coiled coil. The segment covering 637–662 (LSESSSSSSSSSESESSSSDLSSSDS) has biased composition (low complexity). 2 stretches are compositionally biased toward basic and acidic residues: residues 674-692 (TEVK…KMKN) and 885-924 (SGEE…RRRE).

It belongs to the BET family. In terms of assembly, interacts with mRNA splicing machinery proteins SRSF2, DDX5, HNRNPK and TARDBP. Interacts with the acetylated N-terminus of histone H1, H2, H3 and H4. Interacts with P-TEFb components CDK9 and CCNT1/cyclin-T1. Interacts with SMARCE1. Interacts with the acetylated N-terminus of histone H1.4, H2A, H2B, H3 and H4. In terms of processing, ubiquitinated in a SPOP-dependent manner, leading to proteasomal degradation. In terms of tissue distribution, testis-specific. A 3-fold higher expression is seen in adult testis than in embryo testis. Expression seems to be correlated with histone H4 hyperacetylation during the haploid phase of spermatogenesis (spermiogenesis). No expression, or very low expression is seen in patients' testes with abnormal spermatogenesis. Expressed in cancers such as non-small cell lung cancer and squamous cell carcinomas of the head and neck as well as of esophagus, but not in melanoma or in cancers of the colon, breast, kidney and bladder.

The protein localises to the nucleus. Testis-specific chromatin protein that specifically binds histone H4 acetylated at 'Lys-5' and 'Lys-8' (H4K5ac and H4K8ac, respectively) and plays a key role in spermatogenesis. Required in late pachytene spermatocytes: plays a role in meiotic and post-meiotic cells by binding to acetylated histones at the promoter of specific meiotic and post-meiotic genes, facilitating their activation at the appropriate time. In the post-meiotic phase of spermatogenesis, binds to hyperacetylated histones and participates in their general removal from DNA. Also recognizes and binds a subset of butyrylated histones: able to bind histone H4 butyrylated at 'Lys-8' (H4K8ac), while it is not able to bind H4 butyrylated at 'Lys-5' (H4K5ac). Also acts as a component of the splicing machinery in pachytene spermatocytes and round spermatids and participates in 3'-UTR truncation of specific mRNAs in post-meiotic spermatids. Required for chromocenter organization, a structure comprised of peri-centromeric heterochromatin. The polypeptide is Bromodomain testis-specific protein (BRDT) (Homo sapiens (Human)).